The primary structure comprises 364 residues: Large ribosomal subunit protein uL22m (364 aa).

Belongs to the universal ribosomal protein uL22 family. As to quaternary structure, component of the mitochondrial large ribosomal subunit (mt-LSU). Mature N.crassa 74S mitochondrial ribosomes consist of a small (37S) and a large (54S) subunit. The 37S small subunit contains a 16S ribosomal RNA (16S mt-rRNA) and 32 different proteins. The 54S large subunit contains a 23S rRNA (23S mt-rRNA) and 42 different proteins. uL22m forms the wall of the exit tunnel.

The protein resides in the mitochondrion. Functionally, component of the mitochondrial ribosome (mitoribosome), a dedicated translation machinery responsible for the synthesis of mitochondrial genome-encoded proteins, including at least some of the essential transmembrane subunits of the mitochondrial respiratory chain. The mitoribosomes are attached to the mitochondrial inner membrane and translation products are cotranslationally integrated into the membrane. This Neurospora crassa (strain ATCC 24698 / 74-OR23-1A / CBS 708.71 / DSM 1257 / FGSC 987) protein is Large ribosomal subunit protein uL22m (mrpl22).